Here is a 275-residue protein sequence, read N- to C-terminus: Phenylalanine-4-hydroxylase (275 aa).

Residues His-135, His-140, and Glu-181 each coordinate Fe cation.

Belongs to the biopterin-dependent aromatic amino acid hydroxylase family. Requires Fe(2+) as cofactor.

It carries out the reaction (6R)-L-erythro-5,6,7,8-tetrahydrobiopterin + L-phenylalanine + O2 = (4aS,6R)-4a-hydroxy-L-erythro-5,6,7,8-tetrahydrobiopterin + L-tyrosine. It participates in amino-acid degradation; L-phenylalanine degradation; acetoacetate and fumarate from L-phenylalanine: step 1/6. In Mesorhizobium japonicum (strain LMG 29417 / CECT 9101 / MAFF 303099) (Mesorhizobium loti (strain MAFF 303099)), this protein is Phenylalanine-4-hydroxylase (phhA).